Consider the following 216-residue polypeptide: Invasion protein InvF (216 aa).

The region spanning 112–210 (YWLVGYLLAQ…GVSPRKLSNI (99 aa)) is the HTH araC/xylS-type domain. DNA-binding regions (H-T-H motif) lie at residues 129–150 (RMLGEDYGVSYTHFRRLCSRAL) and 177–200 (ITQLAVNHGYSSPSHFSSEIKELI).

In terms of biological role, transcriptional regulator required for the expression of several genes encoding type III secretion system SPI1 effector proteins. The interaction with SicA is necessary for the activation of sigDE (sopB pipC), sicAsipBCDA, and sopE. This Salmonella typhi protein is Invasion protein InvF (invF).